Reading from the N-terminus, the 489-residue chain is Trehalose-6-phosphate synthase (489 aa).

A D-glucose 6-phosphate-binding site is contributed by Arg22. Position 42-43 (42-43) interacts with UDP-alpha-D-glucose; it reads GG. D-glucose 6-phosphate-binding residues include Tyr94 and Asp148. UDP-alpha-D-glucose contacts are provided by Arg290 and Lys295. Arg328 lines the D-glucose 6-phosphate pocket. 393-397 is a UDP-alpha-D-glucose binding site; sequence LVAKE.

Belongs to the glycosyltransferase 20 family. As to quaternary structure, homotetramer.

It carries out the reaction ADP-alpha-D-glucose + D-glucose 6-phosphate = alpha,alpha-trehalose 6-phosphate + ADP + H(+). It catalyses the reaction CDP-alpha-D-glucose + D-glucose 6-phosphate = alpha,alpha-trehalose 6-phosphate + CDP + H(+). The catalysed reaction is GDP-alpha-D-glucose + D-glucose 6-phosphate = alpha,alpha-trehalose 6-phosphate + GDP + H(+). The enzyme catalyses TDP-alpha-D-glucose + D-glucose 6-phosphate = 5-methyl-UDP + alpha,alpha-trehalose 6-phosphate + H(+). It carries out the reaction D-glucose 6-phosphate + UDP-alpha-D-glucose = alpha,alpha-trehalose 6-phosphate + UDP + H(+). The protein operates within glycan biosynthesis; trehalose biosynthesis. Probably involved in the osmoprotection via the biosynthesis of trehalose and in the production of glycogen and alpha-glucan via the TreS-Pep2 branch involved in the biosynthesis of maltose-1-phosphate (M1P). Catalyzes the transfer of glucose from UDP-glucose (UDP-Glc) to D-glucose 6-phosphate (Glc-6-P) to form trehalose-6-phosphate. Probably also able to use ADP-Glc, CDP-Glc, GDP-Glc and TDP-Glc as glucosyl donors. This Mycobacterium sp. (strain KMS) protein is Trehalose-6-phosphate synthase.